Here is a 146-residue protein sequence, read N- to C-terminus: uncharacterized protein (146 aa).

The chain crosses the membrane as a helical span at residues 6–26 (IPIFVISLSNISHIILAIFFF).

It is found in the membrane. This is an uncharacterized protein from Caenorhabditis elegans.